The primary structure comprises 55 residues: Large ribosomal subunit protein bL33 (55 aa).

The protein belongs to the bacterial ribosomal protein bL33 family.

This Gluconobacter oxydans (strain 621H) (Gluconobacter suboxydans) protein is Large ribosomal subunit protein bL33.